The sequence spans 202 residues: dTTP/UTP pyrophosphatase (202 aa).

Asp-74 acts as the Proton acceptor in catalysis.

The protein belongs to the Maf family. YhdE subfamily. A divalent metal cation serves as cofactor.

Its subcellular location is the cytoplasm. The catalysed reaction is dTTP + H2O = dTMP + diphosphate + H(+). It carries out the reaction UTP + H2O = UMP + diphosphate + H(+). Nucleoside triphosphate pyrophosphatase that hydrolyzes dTTP and UTP. May have a dual role in cell division arrest and in preventing the incorporation of modified nucleotides into cellular nucleic acids. The chain is dTTP/UTP pyrophosphatase from Methylococcus capsulatus (strain ATCC 33009 / NCIMB 11132 / Bath).